Consider the following 124-residue polypeptide: Fluoride-specific ion channel FluC (124 aa).

Helical transmembrane passes span 6–26, 34–54, 69–89, and 101–121; these read FAVA…ATWV, FYLA…YLYA, ALII…LDAL, and FAYV…GLAL. Residues Gly-76 and Thr-79 each contribute to the Na(+) site.

It belongs to the fluoride channel Fluc/FEX (TC 1.A.43) family.

It is found in the cell inner membrane. It carries out the reaction fluoride(in) = fluoride(out). With respect to regulation, na(+) is not transported, but it plays an essential structural role and its presence is essential for fluoride channel function. Fluoride-specific ion channel. Important for reducing fluoride concentration in the cell, thus reducing its toxicity. This is Fluoride-specific ion channel FluC from Stutzerimonas stutzeri (strain A1501) (Pseudomonas stutzeri).